Reading from the N-terminus, the 445-residue chain is 26S proteasome regulatory subunit RPN5 (445 aa).

An N-acetylserine modification is found at serine 2. The PCI domain occupies 233-407; the sequence is EYLEVAQYLQ…KIVNFEKPKN (175 aa).

It belongs to the proteasome subunit p55 family. In terms of processing, N-acetylated by NAT1.

Functionally, acts as a regulatory subunit of the 26S proteasome which is involved in the ATP-dependent degradation of ubiquitinated proteins. This Saccharomyces cerevisiae (strain ATCC 204508 / S288c) (Baker's yeast) protein is 26S proteasome regulatory subunit RPN5 (RPN5).